Here is a 496-residue protein sequence, read N- to C-terminus: Nectin 1a (496 aa).

Residues 1–20 form the signal peptide; that stretch reads MMFINLLLRLMCVFLIGADG. At 21-349 the chain is on the extracellular side; the sequence is QMVQMESSKA…FQDQQQAGVV (329 aa). The 105-residue stretch at 34 to 138 folds into the Ig-like V-type domain; it reads GSQVELPCQF…GNRENMVNLT (105 aa). A disulfide bridge connects residues C41 and C121. N62 and N136 each carry an N-linked (GlcNAc...) asparagine glycan. 2 Ig-like C2-type domains span residues 143–238 and 243–330; these read PMIQ…VTLN and PEVI…VIVT. 2 cysteine pairs are disulfide-bonded: C168/C222 and C265/C312. N282 carries N-linked (GlcNAc...) asparagine glycosylation. A helical transmembrane segment spans residues 350–370; sequence IGGAVVCGTVLLAAVTLLVVF. Over 371 to 496 the chain is Cytoplasmic; it reads LYRRRCMFKG…SVISKEEWYV (126 aa).

The protein belongs to the nectin family. Cis- and trans-homodimer. Can form trans-heterodimers. As to expression, expressed in the developing eye and nervous system.

It is found in the cell membrane. It localises to the cell junction. The protein resides in the adherens junction. In terms of biological role, cell adhesion molecule that promotes cell-cell contacts and plays important roles in the development of the nervous system. Acts by forming homophilic or heterophilic trans-dimers. The sequence is that of Nectin 1a from Danio rerio (Zebrafish).